We begin with the raw amino-acid sequence, 207 residues long: Outer-membrane lipoprotein LolB (207 aa).

An N-terminal signal peptide occupies residues 1–21 (MTLPDFRLIRLLPLASLVLTA). Residue Cys22 is the site of N-palmitoyl cysteine attachment. The S-diacylglycerol cysteine moiety is linked to residue Cys22.

Belongs to the LolB family. In terms of assembly, monomer.

It localises to the cell outer membrane. In terms of biological role, plays a critical role in the incorporation of lipoproteins in the outer membrane after they are released by the LolA protein. This chain is Outer-membrane lipoprotein LolB, found in Citrobacter koseri (strain ATCC BAA-895 / CDC 4225-83 / SGSC4696).